The following is a 909-amino-acid chain: Tubulin polyglutamylase TTLL7 (909 aa).

The TTL domain occupies 40-392 (NGAITANVVG…RASDKKKNLA (353 aa)). ATP contacts are provided by residues Lys162, 168–169 (MG), 190–193 (QEYL), and 203–205 (KFD). Arg229 lines the L-glutamate pocket. 251–252 (TN) is a binding site for ATP. L-glutamate-binding residues include Tyr253, Ser254, and Lys273. Residues Asp338, Glu351, and Asn353 each coordinate Mg(2+). Residue Lys369 participates in L-glutamate binding. Positions 390 to 452 (NLAKQKAEAQ…ISREEYENRH (63 aa)) are c-MTBD region. 2 disordered regions span residues 517–580 (DEKL…KVSY) and 603–688 (KAAR…PSIS). A compositionally biased stretch (basic and acidic residues) spans 518–531 (EKLSGKPTRPKEPR). Positions 532 to 542 (TLSSMPESTQT) are enriched in polar residues. Residues 548–562 (NYSSHSSSNSTGSSS) are compositionally biased toward low complexity. The span at 571 to 580 (KEGKEKKVSY) shows a compositional bias: basic and acidic residues. Residues 604–625 (AARPFSNSSSPSSAASMRRSVS) are compositionally biased toward low complexity. The span at 626–657 (CPRSITALNTQSPTTDQRPFSSRISSTITRPL) shows a compositional bias: polar residues. Low complexity predominate over residues 658-673 (SGNRTNSLNRSSSSNR). Polar residues predominate over residues 674 to 688 (VPQSGTSGSVYPSIS).

This sequence belongs to the tubulin--tyrosine ligase family. In terms of assembly, interacts with both alpha- and beta-tubulin (via C-terminal tubulin tails). Requires Mg(2+) as cofactor.

Its subcellular location is the cell projection. It is found in the cilium. The protein resides in the cytoplasm. The protein localises to the cytoskeleton. It localises to the cilium basal body. Its subcellular location is the dendrite. It is found in the perikaryon. The enzyme catalyses L-glutamyl-[protein] + L-glutamate + ATP = gamma-L-glutamyl-L-glutamyl-[protein] + ADP + phosphate + H(+). It catalyses the reaction (L-glutamyl)(n)-gamma-L-glutamyl-L-glutamyl-[protein] + L-glutamate + ATP = (L-glutamyl)(n+1)-gamma-L-glutamyl-L-glutamyl-[protein] + ADP + phosphate + H(+). Its function is as follows. Polyglutamylase which modifies tubulin, generating polyglutamate side chains of variable lengths on the gamma-carboxyl group of specific glutamate residues within the C-terminal tail of tubulin. Mediates both ATP-dependent initiation and elongation steps of the polyglutamylation reaction. Preferentially modifies the beta-tubulin tail over an alpha-tail. Competes with monoglycylase TTLL3 for modification site on beta-tubulin substrate, thereby creating an anticorrelation between glycylation and glutamylation reactions. The protein is Tubulin polyglutamylase TTLL7 of Xenopus tropicalis (Western clawed frog).